Here is a 264-residue protein sequence, read N- to C-terminus: Thymidylate synthase (264 aa).

Residue R21 coordinates dUMP. H51 provides a ligand contact to (6R)-5,10-methylene-5,6,7,8-tetrahydrofolate. 126 to 127 provides a ligand contact to dUMP; the sequence is RR. The active-site Nucleophile is C146. DUMP-binding positions include 166-169, N177, and 207-209; these read RSAD and HIY. D169 contributes to the (6R)-5,10-methylene-5,6,7,8-tetrahydrofolate binding site. Residue S263 participates in (6R)-5,10-methylene-5,6,7,8-tetrahydrofolate binding.

This sequence belongs to the thymidylate synthase family. Bacterial-type ThyA subfamily. In terms of assembly, homodimer.

It is found in the cytoplasm. The catalysed reaction is dUMP + (6R)-5,10-methylene-5,6,7,8-tetrahydrofolate = 7,8-dihydrofolate + dTMP. It participates in pyrimidine metabolism; dTTP biosynthesis. Its function is as follows. Catalyzes the reductive methylation of 2'-deoxyuridine-5'-monophosphate (dUMP) to 2'-deoxythymidine-5'-monophosphate (dTMP) while utilizing 5,10-methylenetetrahydrofolate (mTHF) as the methyl donor and reductant in the reaction, yielding dihydrofolate (DHF) as a by-product. This enzymatic reaction provides an intracellular de novo source of dTMP, an essential precursor for DNA biosynthesis. The protein is Thymidylate synthase of Halalkalibacterium halodurans (strain ATCC BAA-125 / DSM 18197 / FERM 7344 / JCM 9153 / C-125) (Bacillus halodurans).